A 161-amino-acid polypeptide reads, in one-letter code: MIIDKVLGNLHDLPENDLAAYTGLHREKVVLPSAQLVKRIQRATTDHGNEIGIRLASGSGDLRDGDILHVADTNMIVVSVLPTDVLVIAPRTIHEMGVTAHSLGNRHLQAQFFDADSEYGAAVMVCAYDHTVEDYLTHAGVPYTRQERVLPVPFRHAEHSH.

It belongs to the UreE family.

It localises to the cytoplasm. In terms of biological role, involved in urease metallocenter assembly. Binds nickel. Probably functions as a nickel donor during metallocenter assembly. The polypeptide is Urease accessory protein UreE (Pseudarthrobacter chlorophenolicus (strain ATCC 700700 / DSM 12829 / CIP 107037 / JCM 12360 / KCTC 9906 / NCIMB 13794 / A6) (Arthrobacter chlorophenolicus)).